The primary structure comprises 344 residues: Leucine-rich repeat-containing protein 75A (344 aa).

The disordered stretch occupies residues 1 to 25; sequence MGTRQTKGSLAERASPGAAPGPRRE. Residues 11 to 21 are compositionally biased toward low complexity; that stretch reads AERASPGAAPG. 2 LRR repeats span residues 204-217 and 229-242; these read VDSV…LTDD and LPRL…GNRL. The interval 295 to 344 is disordered; sequence LPTILELGEGPGSGEEVREGTVGQEDPGGGPVAPAEDHHEGKETVAAAQT.

Belongs to the LRRC75 family.

The chain is Leucine-rich repeat-containing protein 75A (LRRC75A) from Homo sapiens (Human).